The sequence spans 361 residues: Protein RecA (361 aa).

77–84 (GPESSGKT) provides a ligand contact to ATP.

Belongs to the RecA family.

The protein resides in the cytoplasm. Its function is as follows. Can catalyze the hydrolysis of ATP in the presence of single-stranded DNA, the ATP-dependent uptake of single-stranded DNA by duplex DNA, and the ATP-dependent hybridization of homologous single-stranded DNAs. It interacts with LexA causing its activation and leading to its autocatalytic cleavage. The chain is Protein RecA from Rhizobium rhizogenes (strain K84 / ATCC BAA-868) (Agrobacterium radiobacter).